The sequence spans 341 residues: uncharacterized protein (341 aa).

The helical transmembrane segment at 315 to 337 (VAAWFSGIAGGTFLALKLVSLMM) threads the bilayer.

It is found in the cell membrane. This is an uncharacterized protein from Bacillus subtilis (strain 168).